The following is a 579-amino-acid chain: Glutamine--tRNA ligase (579 aa).

A 'HIGH' region motif is present at residues 41 to 51 (PEPNGYLHIGH). ATP is bound by residues 42 to 44 (EPN) and 48 to 54 (HIGHAKA). 2 residues coordinate L-glutamine: aspartate 74 and tyrosine 218. ATP contacts are provided by residues threonine 237, 285 to 286 (RL), and 293 to 295 (MSK). Positions 292–296 (VMSKR) match the 'KMSKS' region motif.

Belongs to the class-I aminoacyl-tRNA synthetase family. As to quaternary structure, monomer.

It is found in the cytoplasm. It carries out the reaction tRNA(Gln) + L-glutamine + ATP = L-glutaminyl-tRNA(Gln) + AMP + diphosphate. The chain is Glutamine--tRNA ligase from Xanthomonas axonopodis pv. citri (strain 306).